A 368-amino-acid polypeptide reads, in one-letter code: WD repeat-containing protein wdr-5.1 (368 aa).

Residues 1–64 form a disordered region; that stretch reads MDPAQNQPNT…APTTSQESTI (64 aa). Residues 16–42 are compositionally biased toward low complexity; that stretch reads PAVEEAQGVNNSEAEAPAPAALSSVSP. 7 WD repeats span residues 77–116, 119–158, 161–200, 203–242, 246–285, 288–330, and 333–368; these read GHTK…CERT, GHKL…MAKT, GHTN…CVKT, AHSD…CVKT, DENP…TLKQ, GHEN…VVQS, and GHTQ…RSDS.

In Caenorhabditis briggsae, this protein is WD repeat-containing protein wdr-5.1.